The following is a 307-amino-acid chain: Ribosomal RNA small subunit methyltransferase H (307 aa).

S-adenosyl-L-methionine is bound by residues 33–35 (GGY), Asp51, Phe82, Asp96, and Gln103.

This sequence belongs to the methyltransferase superfamily. RsmH family.

The protein resides in the cytoplasm. The catalysed reaction is cytidine(1402) in 16S rRNA + S-adenosyl-L-methionine = N(4)-methylcytidine(1402) in 16S rRNA + S-adenosyl-L-homocysteine + H(+). Its function is as follows. Specifically methylates the N4 position of cytidine in position 1402 (C1402) of 16S rRNA. The protein is Ribosomal RNA small subunit methyltransferase H of Rickettsia rickettsii (strain Iowa).